The following is a 757-amino-acid chain: 5-methyltetrahydropteroyltriglutamate--homocysteine methyltransferase (757 aa).

5-methyltetrahydropteroyltri-L-glutamate is bound by residues 15–18 and Lys-114; that span reads RELK. L-homocysteine contacts are provided by residues 428–430 and Glu-481; that span reads IGS. Residues 428 to 430 and Glu-481 contribute to the L-methionine site; that span reads IGS. 5-methyltetrahydropteroyltri-L-glutamate-binding positions include 512 to 513 and Trp-558; that span reads RC. Asp-596 is a binding site for L-homocysteine. L-methionine is bound at residue Asp-596. Residue Glu-602 participates in 5-methyltetrahydropteroyltri-L-glutamate binding. Residues His-639, Cys-641, and Glu-663 each coordinate Zn(2+). His-692 functions as the Proton donor in the catalytic mechanism. Cys-724 contacts Zn(2+).

Belongs to the vitamin-B12 independent methionine synthase family. Zn(2+) is required as a cofactor.

The enzyme catalyses 5-methyltetrahydropteroyltri-L-glutamate + L-homocysteine = tetrahydropteroyltri-L-glutamate + L-methionine. It functions in the pathway amino-acid biosynthesis; L-methionine biosynthesis via de novo pathway; L-methionine from L-homocysteine (MetE route): step 1/1. Catalyzes the transfer of a methyl group from 5-methyltetrahydrofolate to homocysteine resulting in methionine formation. This is 5-methyltetrahydropteroyltriglutamate--homocysteine methyltransferase from Lactococcus lactis subsp. cremoris (strain MG1363).